Reading from the N-terminus, the 253-residue chain is MASGSNWLSGVNVVLVMAYGSLVFVLLFIFVKRQIMRFAMKSRRGPHVPVGHNAPKDLKEEIDIRLSRVQDIKYEPQLLADDDARLLQLETQGNQSCYNYLYRMKALDAIRTSEIPFHSEGRHPRSLMGKNFRSYLLDLRNTSTPFKGVRKALIDTLLDGYETARYGTGVFGQNEYLRYQEALSELATAVKARIGSSQRHHQSAAKDLTQSPEVSPTTIQVTYLPSSQKSKRAKHFLELKSFKDNYNTLESTL.

Residues 11–31 (VNVVLVMAYGSLVFVLLFIFV) form a helical membrane-spanning segment.

It is found in the membrane. Its subcellular location is the golgi apparatus. The protein resides in the mitochondrion. Functionally, general regulator of phagocytosis. Required to uptake Gram negative bacterium by macrophages. The sequence is that of Protein C1orf43 (C1orf43) from Homo sapiens (Human).